The sequence spans 661 residues: uncharacterized protein (661 aa).

Transmembrane regions (helical) follow at residues 27–47 (LAIG…VSGA), 68–88 (VGFF…IHVV), 116–136 (LWLG…TGVG), 150–170 (VAAS…LVVA), 179–199 (WLGH…TAVT), 214–234 (AAIV…AAAL), 251–271 (GALA…GWAV), 279–299 (GLLA…RLLV), 313–333 (GAAL…VMTA), 369–389 (SLIG…FAAL), 396–416 (WPVG…FTSG), 435–455 (MTLN…TLAL), 488–508 (PITA…TPLF), 519–539 (EFMA…IIGI), 552–572 (IGLL…LMTM), and 599–619 (GGGI…VALV).

It to M.leprae ML1998.

Its subcellular location is the cell membrane. This is an uncharacterized protein from Mycobacterium tuberculosis (strain CDC 1551 / Oshkosh).